The following is a 798-amino-acid chain: Penicillin-binding protein 1A (798 aa).

Over 1-9 the chain is Cytoplasmic; it reads MIKKIMTTC. The chain crosses the membrane as a helical; Signal-anchor for type II membrane protein span at residues 10-30; the sequence is FGLVFGLCVFAVGLLAIAILA. Over 31–798 the chain is Periplasmic; sequence TYPKLPSLDS…SKRQQLDSLF (768 aa). Residues 50–218 are transglycosylase; that stretch reads LTVYSADGKI…SAYNPIVNPE (169 aa). Glu88 (proton donor; for transglycosylase activity) is an active-site residue. A transpeptidase region spans residues 378 to 700; that stretch reads RRALGFAARA…GTIAVPVWVD (323 aa). Catalysis depends on Ser461, which acts as the Acyl-ester intermediate; for transpeptidase activity. Residues 739-798 are disordered; that stretch reads LMLDNGGAAPQPSRRVKEDDGGAAEGGRQEADDESRQDMQETPVLPSNTDSKRQQLDSLF. 2 stretches are compositionally biased toward basic and acidic residues: residues 765 to 777 and 788 to 798; these read GRQE…RQDM and DSKRQQLDSLF.

In the N-terminal section; belongs to the glycosyltransferase 51 family. It in the C-terminal section; belongs to the transpeptidase family.

The protein localises to the cell inner membrane. The enzyme catalyses [GlcNAc-(1-&gt;4)-Mur2Ac(oyl-L-Ala-gamma-D-Glu-L-Lys-D-Ala-D-Ala)](n)-di-trans,octa-cis-undecaprenyl diphosphate + beta-D-GlcNAc-(1-&gt;4)-Mur2Ac(oyl-L-Ala-gamma-D-Glu-L-Lys-D-Ala-D-Ala)-di-trans,octa-cis-undecaprenyl diphosphate = [GlcNAc-(1-&gt;4)-Mur2Ac(oyl-L-Ala-gamma-D-Glu-L-Lys-D-Ala-D-Ala)](n+1)-di-trans,octa-cis-undecaprenyl diphosphate + di-trans,octa-cis-undecaprenyl diphosphate + H(+). It carries out the reaction Preferential cleavage: (Ac)2-L-Lys-D-Ala-|-D-Ala. Also transpeptidation of peptidyl-alanyl moieties that are N-acyl substituents of D-alanine.. Its pathway is cell wall biogenesis; peptidoglycan biosynthesis. Functionally, cell wall formation. Synthesis of cross-linked peptidoglycan from the lipid intermediates. The enzyme has a penicillin-insensitive transglycosylase N-terminal domain (formation of linear glycan strands) and a penicillin-sensitive transpeptidase C-terminal domain (cross-linking of the peptide subunits). The polypeptide is Penicillin-binding protein 1A (mrcA) (Neisseria lactamica).